The following is a 369-amino-acid chain: Homoserine O-succinyltransferase (369 aa).

One can recognise an AB hydrolase-1 domain in the interval 49-328 (NAVFICHALT…RFDSTQSARM (280 aa)). Ser154 functions as the Nucleophile in the catalytic mechanism. Residue Arg224 participates in substrate binding. Active-site residues include Asp317 and His350. Asp351 is a binding site for substrate.

It belongs to the AB hydrolase superfamily. MetX family. Homodimer.

It is found in the cytoplasm. The catalysed reaction is L-homoserine + succinyl-CoA = O-succinyl-L-homoserine + CoA. It functions in the pathway amino-acid biosynthesis; L-methionine biosynthesis via de novo pathway; O-succinyl-L-homoserine from L-homoserine: step 1/1. Its function is as follows. Transfers a succinyl group from succinyl-CoA to L-homoserine, forming succinyl-L-homoserine. The protein is Homoserine O-succinyltransferase of Nocardioides sp. (strain ATCC BAA-499 / JS614).